The following is a 366-amino-acid chain: Anhydro-N-acetylmuramic acid kinase (366 aa).

Residue 10–17 participates in ATP binding; the sequence is GTSLDGVD.

Belongs to the anhydro-N-acetylmuramic acid kinase family.

The enzyme catalyses 1,6-anhydro-N-acetyl-beta-muramate + ATP + H2O = N-acetyl-D-muramate 6-phosphate + ADP + H(+). It participates in amino-sugar metabolism; 1,6-anhydro-N-acetylmuramate degradation. The protein operates within cell wall biogenesis; peptidoglycan recycling. Catalyzes the specific phosphorylation of 1,6-anhydro-N-acetylmuramic acid (anhMurNAc) with the simultaneous cleavage of the 1,6-anhydro ring, generating MurNAc-6-P. Is required for the utilization of anhMurNAc either imported from the medium or derived from its own cell wall murein, and thus plays a role in cell wall recycling. The sequence is that of Anhydro-N-acetylmuramic acid kinase from Nitrobacter winogradskyi (strain ATCC 25391 / DSM 10237 / CIP 104748 / NCIMB 11846 / Nb-255).